Consider the following 207-residue polypeptide: NAD--protein ADP-ribosyltransferase modB (207 aa).

Residue R73 participates in NAD(+) binding. E173 is a catalytic residue.

It belongs to the Tevenvirinae NAD--protein ADP-ribosyltransferase modA family.

The protein resides in the virion. It carries out the reaction L-arginyl-[protein] + NAD(+) = N(omega)-(ADP-D-ribosyl)-L-arginyl-[protein] + nicotinamide + H(+). In terms of biological role, ADP-ribosyltransferase that regulates transcription by ADP-ribosylation of host ribosomal protein S1. Additional identified targets include proteins involved in either translation or cellular metabolism such as elongation factor-Tu or trigger factor. Also reprograms the host's gene-expression system by RNAylating host ribosomal protein S1. ModB can attach NAD-capped RNAs to target proteins post-transcriptionally resulting in covalent RNA-protein conjugates. The protein is NAD--protein ADP-ribosyltransferase modB of Enterobacteria phage T4 (Bacteriophage T4).